The following is a 60-amino-acid chain: Large ribosomal subunit protein uL30 (60 aa).

It belongs to the universal ribosomal protein uL30 family. In terms of assembly, part of the 50S ribosomal subunit.

The chain is Large ribosomal subunit protein uL30 from Streptomyces griseus subsp. griseus (strain JCM 4626 / CBS 651.72 / NBRC 13350 / KCC S-0626 / ISP 5235).